Consider the following 305-residue polypeptide: UDP-3-O-acyl-N-acetylglucosamine deacetylase (305 aa).

3 residues coordinate Zn(2+): His79, His238, and Asp242. His265 acts as the Proton donor in catalysis.

The protein belongs to the LpxC family. Zn(2+) is required as a cofactor.

It carries out the reaction a UDP-3-O-[(3R)-3-hydroxyacyl]-N-acetyl-alpha-D-glucosamine + H2O = a UDP-3-O-[(3R)-3-hydroxyacyl]-alpha-D-glucosamine + acetate. Its pathway is glycolipid biosynthesis; lipid IV(A) biosynthesis; lipid IV(A) from (3R)-3-hydroxytetradecanoyl-[acyl-carrier-protein] and UDP-N-acetyl-alpha-D-glucosamine: step 2/6. Catalyzes the hydrolysis of UDP-3-O-myristoyl-N-acetylglucosamine to form UDP-3-O-myristoylglucosamine and acetate, the committed step in lipid A biosynthesis. In Erwinia tasmaniensis (strain DSM 17950 / CFBP 7177 / CIP 109463 / NCPPB 4357 / Et1/99), this protein is UDP-3-O-acyl-N-acetylglucosamine deacetylase.